Here is a 104-residue protein sequence, read N- to C-terminus: Large ribosomal subunit protein bL21 (104 aa).

The protein belongs to the bacterial ribosomal protein bL21 family. Part of the 50S ribosomal subunit. Contacts protein L20.

Functionally, this protein binds to 23S rRNA in the presence of protein L20. The chain is Large ribosomal subunit protein bL21 from Clostridium botulinum (strain Kyoto / Type A2).